The primary structure comprises 88 residues: Small ribosomal subunit protein uS15 (88 aa).

Belongs to the universal ribosomal protein uS15 family. Part of the 30S ribosomal subunit. Forms a bridge to the 50S subunit in the 70S ribosome, contacting the 23S rRNA.

In terms of biological role, one of the primary rRNA binding proteins, it binds directly to 16S rRNA where it helps nucleate assembly of the platform of the 30S subunit by binding and bridging several RNA helices of the 16S rRNA. Its function is as follows. Forms an intersubunit bridge (bridge B4) with the 23S rRNA of the 50S subunit in the ribosome. The protein is Small ribosomal subunit protein uS15 of Trichlorobacter lovleyi (strain ATCC BAA-1151 / DSM 17278 / SZ) (Geobacter lovleyi).